The following is a 93-amino-acid chain: Small hydrophobic protein (93 aa).

2 helical membrane passes run 5–25 (LIII…VLAY) and 32–52 (AFGP…IYFP).

The protein localises to the membrane. The sequence is that of Small hydrophobic protein from Tupaia virus (isolate Tupaia/Thailand/-/1986) (TUPV).